Reading from the N-terminus, the 480-residue chain is tRNA modification GTPase MnmE (480 aa).

(6S)-5-formyl-5,6,7,8-tetrahydrofolate is bound by residues Arg20, Glu114, and Lys154. Residues 250-406 (GLKLAIIGPP…ILKNIENIAE (157 aa)) form the TrmE-type G domain. Asn260 contacts K(+). GTP-binding positions include 260-265 (NVGKSS), 279-285 (SNIAGTT), and 304-307 (DTAG). Ser264 contacts Mg(2+). Residues Ser279, Ile281, and Thr284 each coordinate K(+). Thr285 lines the Mg(2+) pocket. Position 480 (Lys480) interacts with (6S)-5-formyl-5,6,7,8-tetrahydrofolate.

It belongs to the TRAFAC class TrmE-Era-EngA-EngB-Septin-like GTPase superfamily. TrmE GTPase family. Homodimer. Heterotetramer of two MnmE and two MnmG subunits. It depends on K(+) as a cofactor.

The protein resides in the cytoplasm. In terms of biological role, exhibits a very high intrinsic GTPase hydrolysis rate. Involved in the addition of a carboxymethylaminomethyl (cmnm) group at the wobble position (U34) of certain tRNAs, forming tRNA-cmnm(5)s(2)U34. The polypeptide is tRNA modification GTPase MnmE (Rickettsia felis (strain ATCC VR-1525 / URRWXCal2) (Rickettsia azadi)).